Here is a 185-residue protein sequence, read N- to C-terminus: Photosystem I assembly protein Ycf4 (185 aa).

Transmembrane regions (helical) follow at residues 21 to 43 (NFFW…ISSY) and 68 to 90 (FYGI…NVGS).

This sequence belongs to the Ycf4 family.

Its subcellular location is the plastid. The protein resides in the chloroplast thylakoid membrane. Seems to be required for the assembly of the photosystem I complex. The chain is Photosystem I assembly protein Ycf4 from Aegilops tauschii (Tausch's goatgrass).